A 341-amino-acid chain; its full sequence is Zinc transporter 6, chloroplastic (341 aa).

A helical membrane pass occupies residues 28–48; sequence IVAVFAIFLTSVFGVWGPVLL. At 49 to 61 the chain is on the cytoplasmic side; the sequence is AKYFHGKPLYDKA. The helical transmembrane segment at 62 to 82 threads the bilayer; it reads ILVIKCFAAGVILSTSLVHVL. Residues 83-102 are Lumenal-facing; the sequence is PEAFESLADCQVSSRHPWKD. Residues 103 to 123 traverse the membrane as a helical segment; sequence FPFAGLVTMIGAITALLVDLT. Residues 124-179 are Cytoplasmic-facing; sequence ASEHMGHGGGGGGDGGMEYMPVGKAVGGLEMKEGKCGADLEIQENSEEEIVKMKQR. Residues 180-200 traverse the membrane as a helical segment; sequence LVSQVLEIGIIFHSVIIGVTM. The Lumenal segment spans residues 201-211; sequence GMSQNKCTIRP. The helical transmembrane segment at 212 to 232 threads the bilayer; that stretch reads LIAALSFHQIFEGLGLGGCIA. At 233-243 the chain is on the cytoplasmic side; it reads QAGFKAGTVVY. A helical transmembrane segment spans residues 244 to 264; sequence MCLMFAVTTPLGIVLGMVIFA. Residues 265–280 are Lumenal-facing; that stretch reads ATGYDDQNPNALIMEG. Residues 281–301 traverse the membrane as a helical segment; sequence LLGSFSSGILIYMALVDLIAL. Topologically, residues 302 to 320 are cytoplasmic; it reads DFFHNKMLTTCGESGSRLK. A helical transmembrane segment spans residues 321-341; it reads KLCFVALVLGSASMSLLALWA.

Belongs to the ZIP transporter (TC 2.A.5) family.

Its subcellular location is the plastid. The protein localises to the chloroplast thylakoid membrane. May play a role in the transport of zinc in the plastids. The polypeptide is Zinc transporter 6, chloroplastic (ZIP6) (Arabidopsis thaliana (Mouse-ear cress)).